The sequence spans 92 residues: Small ribosomal subunit protein uS19c (92 aa).

Belongs to the universal ribosomal protein uS19 family.

It localises to the plastid. It is found in the chloroplast. In terms of biological role, protein S19 forms a complex with S13 that binds strongly to the 16S ribosomal RNA. In Rhodomonas salina (Cryptomonas salina), this protein is Small ribosomal subunit protein uS19c.